A 160-amino-acid chain; its full sequence is Nucleotide-binding protein VV1_2655 (160 aa).

It belongs to the YajQ family.

Its function is as follows. Nucleotide-binding protein. In Vibrio vulnificus (strain CMCP6), this protein is Nucleotide-binding protein VV1_2655.